The chain runs to 233 residues: LexA repressor (233 aa).

Residues 26-46 constitute a DNA-binding region (H-T-H motif); sequence FDEMKEALDLRSKSGIHRLIT. Active-site for autocatalytic cleavage activity residues include S154 and K192.

This sequence belongs to the peptidase S24 family. In terms of assembly, homodimer.

It carries out the reaction Hydrolysis of Ala-|-Gly bond in repressor LexA.. Represses a number of genes involved in the response to DNA damage (SOS response), including recA and lexA. In the presence of single-stranded DNA, RecA interacts with LexA causing an autocatalytic cleavage which disrupts the DNA-binding part of LexA, leading to derepression of the SOS regulon and eventually DNA repair. This Roseobacter denitrificans (strain ATCC 33942 / OCh 114) (Erythrobacter sp. (strain OCh 114)) protein is LexA repressor.